The following is a 375-amino-acid chain: Alcohol dehydrogenase 1 (375 aa).

Ser-2 carries the post-translational modification N-acetylserine. Residues Cys-47, His-68, Cys-98, Cys-101, Cys-104, Cys-112, and Cys-175 each contribute to the Zn(2+) site. NAD(+) contacts are provided by residues Gly-200–Gly-205, Asp-224, and Lys-229. Lys-234 carries the N6-succinyllysine modification. Val-293–Val-295 lines the NAD(+) pocket. Residue Lys-340 is modified to N6-succinyllysine. Arg-370 contacts NAD(+).

The protein belongs to the zinc-containing alcohol dehydrogenase family. Class-I subfamily. It depends on Zn(2+) as a cofactor.

It localises to the cytoplasm. It catalyses the reaction a primary alcohol + NAD(+) = an aldehyde + NADH + H(+). It carries out the reaction a secondary alcohol + NAD(+) = a ketone + NADH + H(+). The chain is Alcohol dehydrogenase 1 (ADH1) from Peromyscus maniculatus (North American deer mouse).